Consider the following 396-residue polypeptide: Protein BOP3 (396 aa).

Disordered stretches follow at residues methionine 1–asparagine 22, glycine 98–proline 126, proline 145–histidine 168, valine 203–asparagine 239, arginine 254–leucine 274, and arginine 355–threonine 396. Composition is skewed to polar residues over residues glutamine 111–asparagine 124, alanine 159–histidine 168, and glycine 210–leucine 230. Residues arginine 355–cysteine 369 are compositionally biased toward basic and acidic residues. Positions serine 370–threonine 396 are enriched in polar residues.

Its subcellular location is the cytoplasm. It localises to the nucleus. Functionally, involved in resistance to methylmercury. Overexpression suppresses a PAM1-SLV3 double null mutation. The protein is Protein BOP3 (BOP3) of Saccharomyces cerevisiae (strain ATCC 204508 / S288c) (Baker's yeast).